The chain runs to 129 residues: Small ribosomal subunit protein uS11 (129 aa).

Belongs to the universal ribosomal protein uS11 family. As to quaternary structure, part of the 30S ribosomal subunit. Interacts with proteins S7 and S18. Binds to IF-3.

In terms of biological role, located on the platform of the 30S subunit, it bridges several disparate RNA helices of the 16S rRNA. Forms part of the Shine-Dalgarno cleft in the 70S ribosome. This is Small ribosomal subunit protein uS11 from Staphylococcus carnosus (strain TM300).